The following is a 343-amino-acid chain: 2-deoxy-scyllo-inosamine dehydrogenase (343 aa).

Zn(2+) contacts are provided by Cys-37, His-59, Cys-91, Cys-94, Cys-97, Cys-105, and Glu-146.

It belongs to the zinc-containing alcohol dehydrogenase family. DOIA dehydrogenase subfamily. Requires Zn(2+) as cofactor.

It carries out the reaction 2-deoxy-scyllo-inosamine + NADP(+) = 3-amino-2,3-dideoxy-scyllo-inosose + NADPH + H(+). The enzyme catalyses 2-deoxy-scyllo-inosamine + NAD(+) = 3-amino-2,3-dideoxy-scyllo-inosose + NADH + H(+). It participates in metabolic intermediate biosynthesis; 2-deoxystreptamine biosynthesis; 2-deoxystreptamine from D-glucose 6-phosphate: step 3/4. The protein operates within antibiotic biosynthesis; kanamycin biosynthesis. In terms of biological role, catalyzes the oxidation of 2-deoxy-scyllo-inosamine (DOIA) with NAD(+) or NADP(+), forming 3-amino-2,3-dideoxy-scyllo-inosose (amino-DOI). The protein is 2-deoxy-scyllo-inosamine dehydrogenase (kanE) of Streptomyces kanamyceticus.